Reading from the N-terminus, the 66-residue chain is Large ribosomal subunit protein uL29 (66 aa).

The protein belongs to the universal ribosomal protein uL29 family.

This Lysinibacillus sphaericus (strain C3-41) protein is Large ribosomal subunit protein uL29.